Reading from the N-terminus, the 322-residue chain is MLNSFKLSLQYILPKLWLTRLAGWGASKRAGWLTKLVIDLFVKYYKVDMKEAQKPDTASYRTFNEFFVRPLRDEVRPIDTDPNVLVMPADGVISQLGKIEEDKILQAKGHNYSLEALLAGNYLMADLFRNGTFVTTYLSPRDYHRVHMPCNGILREMIYVPGDLFSVNHLTAQNVPNLFARNERVICLFDTEFGPMAQILVGATIVGSIETVWAGTITPPREGIIKRWTWPAGENDGSVALLKGQEMGRFKLGSTVINLFAPGKVNLVEQLESLSVTKIGQPLAVSTETFVTPDAEPAPLPAEEIEAEHDASPLVDDKKDQV.

Active-site charge relay system; for autoendoproteolytic cleavage activity residues include Asp90, His147, and Ser254. Ser254 (schiff-base intermediate with substrate; via pyruvic acid; for decarboxylase activity) is an active-site residue. Ser254 carries the pyruvic acid (Ser); by autocatalysis modification. The interval Pro293–Val322 is disordered. A compositionally biased stretch (basic and acidic residues) spans Glu308–Val322.

This sequence belongs to the phosphatidylserine decarboxylase family. PSD-B subfamily. Prokaryotic type I sub-subfamily. As to quaternary structure, heterodimer of a large membrane-associated beta subunit and a small pyruvoyl-containing alpha subunit. Requires pyruvate as cofactor. Post-translationally, is synthesized initially as an inactive proenzyme. Formation of the active enzyme involves a self-maturation process in which the active site pyruvoyl group is generated from an internal serine residue via an autocatalytic post-translational modification. Two non-identical subunits are generated from the proenzyme in this reaction, and the pyruvate is formed at the N-terminus of the alpha chain, which is derived from the carboxyl end of the proenzyme. The autoendoproteolytic cleavage occurs by a canonical serine protease mechanism, in which the side chain hydroxyl group of the serine supplies its oxygen atom to form the C-terminus of the beta chain, while the remainder of the serine residue undergoes an oxidative deamination to produce ammonia and the pyruvoyl prosthetic group on the alpha chain. During this reaction, the Ser that is part of the protease active site of the proenzyme becomes the pyruvoyl prosthetic group, which constitutes an essential element of the active site of the mature decarboxylase.

The protein localises to the cell membrane. It carries out the reaction a 1,2-diacyl-sn-glycero-3-phospho-L-serine + H(+) = a 1,2-diacyl-sn-glycero-3-phosphoethanolamine + CO2. It functions in the pathway phospholipid metabolism; phosphatidylethanolamine biosynthesis; phosphatidylethanolamine from CDP-diacylglycerol: step 2/2. Functionally, catalyzes the formation of phosphatidylethanolamine (PtdEtn) from phosphatidylserine (PtdSer). In Escherichia coli O139:H28 (strain E24377A / ETEC), this protein is Phosphatidylserine decarboxylase proenzyme.